Here is a 184-residue protein sequence, read N- to C-terminus: Oligoribonuclease (184 aa).

Residues 8–171 (LIWIDLEMTG…DDIRESIAEL (164 aa)) enclose the Exonuclease domain. Y129 is a catalytic residue.

Belongs to the oligoribonuclease family.

The protein resides in the cytoplasm. Its function is as follows. 3'-to-5' exoribonuclease specific for small oligoribonucleotides. This Pasteurella multocida (strain Pm70) protein is Oligoribonuclease.